We begin with the raw amino-acid sequence, 118 residues long: MARIAGVNIPDHKHAVISLTYVFGIGKTTAKQICAATGVAESTKISALDDAKMDEIRAEVAKHTVEGDLRREISMNIKRLMDLGCYRGLRHRRSLPVRGQRSKTNARTRKGPRKPIKK.

Positions 93-118 (RSLPVRGQRSKTNARTRKGPRKPIKK) are disordered.

It belongs to the universal ribosomal protein uS13 family. Part of the 30S ribosomal subunit. Forms a loose heterodimer with protein S19. Forms two bridges to the 50S subunit in the 70S ribosome.

Its function is as follows. Located at the top of the head of the 30S subunit, it contacts several helices of the 16S rRNA. In the 70S ribosome it contacts the 23S rRNA (bridge B1a) and protein L5 of the 50S subunit (bridge B1b), connecting the 2 subunits; these bridges are implicated in subunit movement. Contacts the tRNAs in the A and P-sites. In Teredinibacter turnerae (strain ATCC 39867 / T7901), this protein is Small ribosomal subunit protein uS13.